The chain runs to 478 residues: Cytochrome c-552 (478 aa).

Positions methionine 1 to alanine 26 are cleaved as a signal peptide. Residue histidine 94 coordinates heme c. The heme site is built by cysteine 122, cysteine 125, and lysine 126. Heme c contacts are provided by cysteine 160, cysteine 163, histidine 164, cysteine 209, cysteine 212, and histidine 213. Positions 215, 216, 261, and 263 each coordinate Ca(2+). Substrate is bound at residue tyrosine 216. A substrate-binding site is contributed by histidine 264. Heme c-binding residues include histidine 275, cysteine 282, cysteine 285, histidine 286, histidine 301, cysteine 314, cysteine 317, histidine 318, and histidine 393.

This sequence belongs to the cytochrome c-552 family. Requires Ca(2+) as cofactor. The cofactor is heme c.

Its subcellular location is the periplasm. The catalysed reaction is 6 Fe(III)-[cytochrome c] + NH4(+) + 2 H2O = 6 Fe(II)-[cytochrome c] + nitrite + 8 H(+). It functions in the pathway nitrogen metabolism; nitrate reduction (assimilation). In terms of biological role, catalyzes the reduction of nitrite to ammonia, consuming six electrons in the process. This is Cytochrome c-552 from Salmonella dublin (strain CT_02021853).